A 310-amino-acid chain; its full sequence is 4-hydroxyproline epimerase (310 aa).

The active-site Proton acceptor is the C88. Residues 89–90 (GH), H208, and D232 each bind substrate. The active-site Proton donor is C236. Position 237–238 (237–238 (GT)) interacts with substrate.

This sequence belongs to the proline racemase family. Homodimer.

It carries out the reaction trans-4-hydroxy-L-proline = cis-4-hydroxy-D-proline. Its function is as follows. Allows intracellular utilization of 4-hydroxyproline, one of the major constituents of host collagen, by converting 4-hydroxy-L-proline to 4-hydroxy-D-proline, which can be further metabolized by intracellular 4-hydroxy-D-proline oxidases. This Burkholderia cenocepacia (strain HI2424) protein is 4-hydroxyproline epimerase.